The primary structure comprises 338 residues: Biotin synthase (338 aa).

Residues 45–272 (DEVQMSTLLS…QSVVRLSAGR (228 aa)) enclose the Radical SAM core domain. The [4Fe-4S] cluster site is built by C60, C64, and C67. Positions 104, 135, 195, and 267 each coordinate [2Fe-2S] cluster.

It belongs to the radical SAM superfamily. Biotin synthase family. In terms of assembly, homodimer. Requires [4Fe-4S] cluster as cofactor. [2Fe-2S] cluster is required as a cofactor.

It carries out the reaction (4R,5S)-dethiobiotin + (sulfur carrier)-SH + 2 reduced [2Fe-2S]-[ferredoxin] + 2 S-adenosyl-L-methionine = (sulfur carrier)-H + biotin + 2 5'-deoxyadenosine + 2 L-methionine + 2 oxidized [2Fe-2S]-[ferredoxin]. It functions in the pathway cofactor biosynthesis; biotin biosynthesis; biotin from 7,8-diaminononanoate: step 2/2. Catalyzes the conversion of dethiobiotin (DTB) to biotin by the insertion of a sulfur atom into dethiobiotin via a radical-based mechanism. The chain is Biotin synthase from Parvibaculum lavamentivorans (strain DS-1 / DSM 13023 / NCIMB 13966).